The following is a 246-amino-acid chain: Small ribosomal subunit protein uS3 (246 aa).

Residues 23 to 94 (LNEFLTRELA…RIELYAEKVA (72 aa)) enclose the KH type-2 domain. Residues 201 to 246 (GPKKPLPDNVSVVEPKEEKIYETPETEYKIPPPSKPLDDLSEAKVL) are disordered. Basic and acidic residues-rich tracts occupy residues 214–228 (EPKE…ETEY) and 236–246 (PLDDLSEAKVL). Phosphothreonine is present on residues Thr-223 and Thr-226. Residue Ser-241 is modified to Phosphoserine.

The protein belongs to the universal ribosomal protein uS3 family. In terms of assembly, interacts with LTV1; the interaction is RNA-independent.

It localises to the cytoplasm. Its subcellular location is the nucleus. Functionally, has DNA repair activity directed towards the mutagenic lesions 8-oxoguanine and abasic sites in DNA. It can cleave DNA containing 8-oxoguanine residues efficiently. Also acts as an ap lyase, cleaving phosphodiester bonds via a beta,delta elimination reaction. The sequence is that of Small ribosomal subunit protein uS3 (RpS3) from Drosophila melanogaster (Fruit fly).